The following is a 156-amino-acid chain: Small ribosomal subunit protein uS7 (156 aa).

Belongs to the universal ribosomal protein uS7 family. In terms of assembly, part of the 30S ribosomal subunit. Contacts proteins S9 and S11.

In terms of biological role, one of the primary rRNA binding proteins, it binds directly to 16S rRNA where it nucleates assembly of the head domain of the 30S subunit. Is located at the subunit interface close to the decoding center, probably blocks exit of the E-site tRNA. This is Small ribosomal subunit protein uS7 from Colwellia psychrerythraea (strain 34H / ATCC BAA-681) (Vibrio psychroerythus).